The primary structure comprises 289 residues: Acetyl-coenzyme A carboxylase carboxyl transferase subunit beta (289 aa).

The CoA carboxyltransferase N-terminal domain maps to 36–289; that stretch reads MWLRCPHCHQ…LLKTGSVANE (254 aa). Zn(2+)-binding residues include cysteine 40, cysteine 43, cysteine 58, and cysteine 61. The segment at 40–61 adopts a C4-type zinc-finger fold; it reads CPHCHQLLFAKQLTQYAVCPNC.

Belongs to the AccD/PCCB family. Acetyl-CoA carboxylase is a heterohexamer composed of biotin carboxyl carrier protein (AccB), biotin carboxylase (AccC) and two subunits each of ACCase subunit alpha (AccA) and ACCase subunit beta (AccD). Zn(2+) serves as cofactor.

It is found in the cytoplasm. It catalyses the reaction N(6)-carboxybiotinyl-L-lysyl-[protein] + acetyl-CoA = N(6)-biotinyl-L-lysyl-[protein] + malonyl-CoA. It functions in the pathway lipid metabolism; malonyl-CoA biosynthesis; malonyl-CoA from acetyl-CoA: step 1/1. Component of the acetyl coenzyme A carboxylase (ACC) complex. Biotin carboxylase (BC) catalyzes the carboxylation of biotin on its carrier protein (BCCP) and then the CO(2) group is transferred by the transcarboxylase to acetyl-CoA to form malonyl-CoA. This chain is Acetyl-coenzyme A carboxylase carboxyl transferase subunit beta, found in Limosilactobacillus reuteri subsp. reuteri (strain JCM 1112) (Lactobacillus reuteri).